The chain runs to 164 residues: Transcription elongation factor GreA (164 aa).

The protein belongs to the GreA/GreB family.

Functionally, necessary for efficient RNA polymerase transcription elongation past template-encoded arresting sites. The arresting sites in DNA have the property of trapping a certain fraction of elongating RNA polymerases that pass through, resulting in locked ternary complexes. Cleavage of the nascent transcript by cleavage factors such as GreA or GreB allows the resumption of elongation from the new 3'terminus. GreA releases sequences of 2 to 3 nucleotides. The sequence is that of Transcription elongation factor GreA from Helicobacter pylori (strain P12).